Reading from the N-terminus, the 217-residue chain is ATP-dependent Clp protease proteolytic subunit (217 aa).

Ser121 functions as the Nucleophile in the catalytic mechanism. His146 is an active-site residue.

Belongs to the peptidase S14 family. In terms of assembly, fourteen ClpP subunits assemble into 2 heptameric rings which stack back to back to give a disk-like structure with a central cavity, resembling the structure of eukaryotic proteasomes.

Its subcellular location is the cytoplasm. The enzyme catalyses Hydrolysis of proteins to small peptides in the presence of ATP and magnesium. alpha-casein is the usual test substrate. In the absence of ATP, only oligopeptides shorter than five residues are hydrolyzed (such as succinyl-Leu-Tyr-|-NHMec, and Leu-Tyr-Leu-|-Tyr-Trp, in which cleavage of the -Tyr-|-Leu- and -Tyr-|-Trp bonds also occurs).. Cleaves peptides in various proteins in a process that requires ATP hydrolysis. Has a chymotrypsin-like activity. Plays a major role in the degradation of misfolded proteins. The polypeptide is ATP-dependent Clp protease proteolytic subunit (Burkholderia mallei (strain NCTC 10247)).